Here is a 310-residue protein sequence, read N- to C-terminus: Glycine--tRNA ligase alpha subunit (310 aa).

The protein belongs to the class-II aminoacyl-tRNA synthetase family. In terms of assembly, tetramer of two alpha and two beta subunits.

It is found in the cytoplasm. The enzyme catalyses tRNA(Gly) + glycine + ATP = glycyl-tRNA(Gly) + AMP + diphosphate. This Aliivibrio salmonicida (strain LFI1238) (Vibrio salmonicida (strain LFI1238)) protein is Glycine--tRNA ligase alpha subunit.